Consider the following 203-residue polypeptide: Urease accessory protein UreG (203 aa).

A GTP-binding site is contributed by 14–21; that stretch reads GPVGSGKT.

It belongs to the SIMIBI class G3E GTPase family. UreG subfamily. As to quaternary structure, homodimer. UreD, UreF and UreG form a complex that acts as a GTP-hydrolysis-dependent molecular chaperone, activating the urease apoprotein by helping to assemble the nickel containing metallocenter of UreC. The UreE protein probably delivers the nickel.

It is found in the cytoplasm. Functionally, facilitates the functional incorporation of the urease nickel metallocenter. This process requires GTP hydrolysis, probably effectuated by UreG. This Rhizobium leguminosarum bv. trifolii (strain WSM2304) protein is Urease accessory protein UreG.